The primary structure comprises 413 residues: Tryptophan synthase beta chain 2 (413 aa).

K107 is modified (N6-(pyridoxal phosphate)lysine).

This sequence belongs to the TrpB family. As to quaternary structure, tetramer of two alpha and two beta chains. Pyridoxal 5'-phosphate is required as a cofactor.

It catalyses the reaction (1S,2R)-1-C-(indol-3-yl)glycerol 3-phosphate + L-serine = D-glyceraldehyde 3-phosphate + L-tryptophan + H2O. It functions in the pathway amino-acid biosynthesis; L-tryptophan biosynthesis; L-tryptophan from chorismate: step 5/5. Its function is as follows. The beta subunit is responsible for the synthesis of L-tryptophan from indole and L-serine. This is Tryptophan synthase beta chain 2 (trpB2) from Nostoc sp. (strain PCC 7120 / SAG 25.82 / UTEX 2576).